Here is a 173-residue protein sequence, read N- to C-terminus: Large ribosomal subunit protein uL14mz (173 aa).

A mitochondrion-targeting transit peptide spans 1 to 61; the sequence is MAAAFASRLT…TVLKVVDNSG (61 aa).

Belongs to the universal ribosomal protein uL14 family. As to quaternary structure, part of the mitochondrial 50S ribosomal subunit. Mostly expressed in leaves and inflorescences, including floral organs and meristems, and, to a lower extent, in pistils.

Its subcellular location is the mitochondrion. Functionally, binds to 23S rRNA in mitochondrion. The polypeptide is Large ribosomal subunit protein uL14mz (HLP) (Arabidopsis thaliana (Mouse-ear cress)).